A 322-amino-acid polypeptide reads, in one-letter code: AB hydrolase superfamily protein FGSG_00044 (322 aa).

Positions 36–319 (RTTPKQPVAI…ITAEVRRIVK (284 aa)) constitute an AB hydrolase-1 domain.

This sequence belongs to the AB hydrolase superfamily.

The protein operates within mycotoxin biosynthesis. Its function is as follows. AB hydrolase superfamily protein; part of the gene cluster that mediates the biosynthesis of gramillins A and B, bicyclic lipopeptides that induce cell death in maize leaves but not in wheat leaves. The nonribosomal peptide synthetase GRA1 incorporates respectively a glutamic adic (Glu), a leucine (Leu), a serine (Ser), a hydroxyglutamine (HOGln), a 2-amino decanoic acid, and 2 cysteins (CysB and CysA). The biosynthesis of 2-amino decanoic acid incorporated in gramillins could be initiated by a fatty acid synthase composed of the alpha and beta subunits FGSG_00036 and FGSG_11656. The cytochrome P450 monooxygenase FGSG_15680 could hydroxylate the fatty acid chain. Subsequent oxidation to the ketone by the oxidoreductase FGSG_00048 and transamination by aminotransferase FGSG_00049 could form 2-amino-decanoic acid. On the other hand, FGSG_15680 could also be responsible for the HO-modified glutamine at the gamma-position. Whether hydroxylation occurs on the fully assembled product or on the Gln residue prior to assembly into the gramillins requires further proof. The thioredoxin FGSG_00043 could also be required for the disulfide-bond formation between CysA and CysB. The specific involvement of the remaining proteins from the cluster is more difficult to discern, but could have broader regulatory (FGSG_00040 and FGSG_11657) or enzymatic functions (FGSG_00044 and FGSG_00045). The final C-domain of GRA1 does not possess the expected sequence of a termination CT domain, often implicated in macrocyclization and release of a cyclopeptidein fungal NRPs; and the thioesterase FGSG_00047 may act in concert with the terminal C-domain of GRA1 to catalyze the formation of the macrocyclic anhydride and release of the products. The polypeptide is AB hydrolase superfamily protein FGSG_00044 (Gibberella zeae (strain ATCC MYA-4620 / CBS 123657 / FGSC 9075 / NRRL 31084 / PH-1) (Wheat head blight fungus)).